The chain runs to 377 residues: DNA replication and repair protein RecF (377 aa).

30-37 contacts ATP; it reads GLNGSGKT.

It belongs to the RecF family.

The protein localises to the cytoplasm. In terms of biological role, the RecF protein is involved in DNA metabolism; it is required for DNA replication and normal SOS inducibility. RecF binds preferentially to single-stranded, linear DNA. It also seems to bind ATP. This chain is DNA replication and repair protein RecF, found in Cytophaga hutchinsonii (strain ATCC 33406 / DSM 1761 / CIP 103989 / NBRC 15051 / NCIMB 9469 / D465).